Reading from the N-terminus, the 636-residue chain is Transcriptional repressor CTCFL (636 aa).

Disordered regions lie at residues 17–38, 160–195, and 222–257; these read KEQKLKPGDLEEEKEEDGVQRV, ENPELTPDLDESTALKKPEEDEKDQLPPQGETDKRE, and LEEQQDPPAANQTSVPGAKAAKPKRRRQTKGKPQSF. The segment covering 160-170 has biased composition (acidic residues); the sequence is ENPELTPDLDE. Residues 242–251 show a composition bias toward basic residues; the sequence is AKPKRRRQTK. 11 C2H2-type zinc fingers span residues 257-279, 285-307, 313-336, 342-364, 370-392, 398-421, 428-451, 458-480, 486-508, 514-537, and 546-572; these read FQCDTCPFTSSKLSTFNRHIKIH, HLCHLCLKAFRTVTLLRNHVNTH, HKCRDCDMAFVTSGELVRHRRYKH, FKCSLCKYASVEASKMKRHIRSH, FQCCQCAYASRDSYKLKRHMRTH, YECPTCHVRFTQSGTMKIHIAQKH, YECPHCATIIARKSDLRVHLRNLH, MKCRYCPAGFHERYALIQHQRTH, FKCKQCDYACKQERCLKAHMRMH, FSCLACNKHFRQKQLLTVHLRKYH, and HLCLKCDKRFSRWSNLQRHRKKCDPEH. Residues 562 to 624 are disordered; that stretch reads QRHRKKCDPE…AAGSQSPDHG (63 aa). Positions 568-583 are enriched in basic and acidic residues; it reads CDPEHETLAPNKDRRP.

Belongs to the CTCF zinc-finger protein family. In terms of assembly, interacts with histones, PRMT7 and SETD1A. Interacts (via N-terminus) with BAG6/BAT3. As to expression, testis-specific.

It is found in the cytoplasm. It localises to the nucleus. Functionally, testis-specific DNA binding protein responsible for insulator function, nuclear architecture and transcriptional control, which probably acts by recruiting epigenetic chromatin modifiers. Plays a key role in gene imprinting in male germline, by participating in the establishment of differential methylation at the IGF2/H19 imprinted control region (ICR). Directly binds the unmethylated H19 ICR and recruits the PRMT7 methyltransferase, leading to methylate histone H4 'Arg-3' to form H4R3sme2. This probably leads to recruit de novo DNA methyltransferases at these sites. Seems to act as tumor suppressor. In association with DNMT1 and DNMT3B, involved in activation of BAG1 gene expression by binding to its promoter. Required for dimethylation of H3 lysine 4 (H3K4me2) of MYC and BRCA1 promoters. The protein is Transcriptional repressor CTCFL (Ctcfl) of Mus musculus (Mouse).